Reading from the N-terminus, the 637-residue chain is Chaperone protein HtpG (637 aa).

The interval M1–R338 is a; substrate-binding. Positions E339–K552 are b. The tract at residues I553–D637 is c.

Belongs to the heat shock protein 90 family. In terms of assembly, homodimer.

It is found in the cytoplasm. Molecular chaperone. Has ATPase activity. The sequence is that of Chaperone protein HtpG from Nitrobacter winogradskyi (strain ATCC 25391 / DSM 10237 / CIP 104748 / NCIMB 11846 / Nb-255).